We begin with the raw amino-acid sequence, 482 residues long: UDP-glycosyltransferase 86A2 (482 aa).

UDP-alpha-D-glucose is bound by residues Ser-297, 355 to 357 (CCQ), 372 to 380 (HCGWNSILE), and 394 to 397 (LTDQ).

Belongs to the UDP-glycosyltransferase family.

This chain is UDP-glycosyltransferase 86A2 (UGT86A2), found in Arabidopsis thaliana (Mouse-ear cress).